Here is a 136-residue protein sequence, read N- to C-terminus: UPF0225 protein Mpe_A2093 (136 aa).

The protein belongs to the UPF0225 family.

The protein is UPF0225 protein Mpe_A2093 of Methylibium petroleiphilum (strain ATCC BAA-1232 / LMG 22953 / PM1).